A 94-amino-acid chain; its full sequence is Non-specific lipid-transfer protein C4 (94 aa).

Positions 1–26 are cleaved as a signal peptide; sequence MAASKGNAAAAACALVLVLLAVGAEA. 4 cysteine pairs are disulfide-bonded: Cys-34–Cys-72, Cys-44–Cys-59, Cys-60–Cys-85, and Cys-70–Cys-92. N-linked (GlcNAc...) asparagine glycosylation is present at Asn-91.

It belongs to the plant LTP family.

Functionally, lipid-transfer protein that may be regulated by the transcription factor UDT1 in developing anthers and play a role in tapetum development. The protein is Non-specific lipid-transfer protein C4 of Oryza sativa subsp. japonica (Rice).